We begin with the raw amino-acid sequence, 153 residues long: Cytochrome c-type biogenesis protein CcmE (153 aa).

Topologically, residues 1–8 are cytoplasmic; it reads MTTRRGRR. A helical; Signal-anchor for type II membrane protein transmembrane segment spans residues 9-29; the sequence is ALLIAGGVGLLALAAALVLNA. The Periplasmic segment spans residues 30 to 153; sequence LRSNLVFFFS…PSATLQTEAR (124 aa). Residues histidine 124 and tyrosine 128 each contribute to the heme site.

Belongs to the CcmE/CycJ family.

The protein resides in the cell inner membrane. In terms of biological role, heme chaperone required for the biogenesis of c-type cytochromes. Transiently binds heme delivered by CcmC and transfers the heme to apo-cytochromes in a process facilitated by CcmF and CcmH. The protein is Cytochrome c-type biogenesis protein CcmE of Bordetella parapertussis (strain 12822 / ATCC BAA-587 / NCTC 13253).